Here is a 385-residue protein sequence, read N- to C-terminus: Alkanesulfonate monooxygenase 2 (385 aa).

Belongs to the SsuD family.

It carries out the reaction an alkanesulfonate + FMNH2 + O2 = an aldehyde + FMN + sulfite + H2O + 2 H(+). Catalyzes the desulfonation of aliphatic sulfonates. This chain is Alkanesulfonate monooxygenase 2 (ssuD2), found in Mesorhizobium japonicum (strain LMG 29417 / CECT 9101 / MAFF 303099) (Mesorhizobium loti (strain MAFF 303099)).